We begin with the raw amino-acid sequence, 344 residues long: Protease HtpX homolog (344 aa).

3 consecutive transmembrane segments (helical) span residues 8–28, 46–66, and 74–94; these read VALGLYMLGYLFMFVIAATVA, ALTGVMIVLTTAFVIYLFVLV, and VSFLVGLIAFVVLMNLLTYVA. Zn(2+) is bound at residue His172. Glu173 is an active-site residue. His176 is a binding site for Zn(2+). The next 2 helical transmembrane spans lie at 183 to 203 and 220 to 240; these read AIMLLFGVLPSVVYYLGVTAV and LAVGVVAVLASFLIQLLVLAF. Glu245 lines the Zn(2+) pocket.

It belongs to the peptidase M48B family. The cofactor is Zn(2+).

It localises to the cell membrane. The chain is Protease HtpX homolog from Pyrobaculum calidifontis (strain DSM 21063 / JCM 11548 / VA1).